The primary structure comprises 89 residues: Small ribosomal subunit protein uS14A (89 aa).

This sequence belongs to the universal ribosomal protein uS14 family. As to quaternary structure, part of the 30S ribosomal subunit. Contacts proteins S3 and S10.

Binds 16S rRNA, required for the assembly of 30S particles and may also be responsible for determining the conformation of the 16S rRNA at the A site. The polypeptide is Small ribosomal subunit protein uS14A (Lactiplantibacillus plantarum (strain ATCC BAA-793 / NCIMB 8826 / WCFS1) (Lactobacillus plantarum)).